Reading from the N-terminus, the 123-residue chain is Small ribosomal subunit protein uS12 (123 aa).

At Asp-89 the chain carries 3-methylthioaspartic acid.

Belongs to the universal ribosomal protein uS12 family. As to quaternary structure, part of the 30S ribosomal subunit. Contacts proteins S8 and S17. May interact with IF1 in the 30S initiation complex.

Its function is as follows. With S4 and S5 plays an important role in translational accuracy. Functionally, interacts with and stabilizes bases of the 16S rRNA that are involved in tRNA selection in the A site and with the mRNA backbone. Located at the interface of the 30S and 50S subunits, it traverses the body of the 30S subunit contacting proteins on the other side and probably holding the rRNA structure together. The combined cluster of proteins S8, S12 and S17 appears to hold together the shoulder and platform of the 30S subunit. This chain is Small ribosomal subunit protein uS12, found in Rhodopseudomonas palustris (strain BisB18).